The sequence spans 374 residues: C-X-C chemokine receptor type 5 (374 aa).

At 1-57 (MNYPLTLDMGSITYNMDDLYKELAFYSNSTEIPLQDSNFCSTVEGPLLTSFKAVFMP) the chain is on the extracellular side. A glycan (N-linked (GlcNAc...) asparagine) is linked at Asn28. Residues 58–78 (VAYSLIFLLGMMGNILVLVIL) form a helical membrane-spanning segment. Residues 79 to 90 (ERHRHTRSSTET) are Cytoplasmic-facing. Residues 91–111 (FLFHLAVADLLLVFILPFAVA) traverse the membrane as a helical segment. At 112–126 (EGSVGWVLGTFLCKT) the chain is on the extracellular side. Cys124 and Cys204 are oxidised to a cystine. A helical transmembrane segment spans residues 127–147 (VIALHKINFYCSSLLLACIAV). The Cytoplasmic segment spans residues 148 to 169 (DRYLAIVHAVHAYRRRRLLSIH). Residues 170-190 (ITCTAIWLAGFLFALPELLFA) traverse the membrane as a helical segment. The Extracellular segment spans residues 191-221 (KVGQPHNNDSLPQCTFSQENEAETRAWFTSR). The N-linked (GlcNAc...) asparagine glycan is linked to Asn198. The helical transmembrane segment at 222–242 (FLYHIGGFLLPMLVMGWCYVG) threads the bilayer. At 243-261 (VVHRLLQAQRRPQRQKAVR) the chain is on the cytoplasmic side. Residues 262–282 (VAILVTSIFFLCWSPYHIVIF) traverse the membrane as a helical segment. At 283-306 (LDTLERLKAVNSSCELSGYLSVAI) the chain is on the extracellular side. Residues 307–327 (TLCEFLGLAHCCLNPMLYTFA) traverse the membrane as a helical segment. Residues 328–374 (GVKFRSDLSRLLTKLGCAGPASLCQLFPNWRKSSLSESENATSLTTF) are Cytoplasmic-facing.

The protein belongs to the G-protein coupled receptor 1 family. As to expression, mainly in spleen, in resting B-cells.

The protein localises to the cell membrane. Its function is as follows. Cytokine receptor that binds to B-lymphocyte chemoattractant (BLC). Involved in B-cell migration into B-cell follicles of spleen and Peyer patches but not into those of mesenteric or peripheral lymph nodes. The sequence is that of C-X-C chemokine receptor type 5 (Cxcr5) from Mus musculus (Mouse).